Here is a 717-residue protein sequence, read N- to C-terminus: Polyribonucleotide nucleotidyltransferase (717 aa).

D495 and D501 together coordinate Mg(2+). The region spanning 562 to 624 (PRMIMIQIPK…TALDSALSQI (63 aa)) is the KH domain. An S1 motif domain is found at 634–703 (GEVYEGKVKS…KTGKYRLSRK (70 aa)).

Belongs to the polyribonucleotide nucleotidyltransferase family. The cofactor is Mg(2+).

It localises to the cytoplasm. It carries out the reaction RNA(n+1) + phosphate = RNA(n) + a ribonucleoside 5'-diphosphate. Its function is as follows. Involved in mRNA degradation. Catalyzes the phosphorolysis of single-stranded polyribonucleotides processively in the 3'- to 5'-direction. This Cytophaga hutchinsonii (strain ATCC 33406 / DSM 1761 / CIP 103989 / NBRC 15051 / NCIMB 9469 / D465) protein is Polyribonucleotide nucleotidyltransferase.